A 43-amino-acid chain; its full sequence is Protein PsbN (43 aa).

Residues Thr5–Phe27 traverse the membrane as a helical segment.

The protein belongs to the PsbN family.

It is found in the plastid. It localises to the chloroplast thylakoid membrane. Functionally, may play a role in photosystem I and II biogenesis. The protein is Protein PsbN of Houttuynia cordata (Chameleon plant).